We begin with the raw amino-acid sequence, 479 residues long: Putative F-box protein At1g67390 (479 aa).

In terms of domain architecture, F-box spans 40 to 88; it reads DDRISKLPDDVLVMILASLSTEDALKTSVLSTRWKNVWKQVPYLHFDLL.

This is Putative F-box protein At1g67390 from Arabidopsis thaliana (Mouse-ear cress).